The following is a 629-amino-acid chain: Phosphatidylinositol-3,5-bisphosphate 3-phosphatase MTMR8 (629 aa).

The region spanning 126–500 is the Myotubularin phosphatase domain; sequence GWKLIDLKVD…FSFQFWCGMY (375 aa). Asn250, Asn275, and Ile276 together coordinate a 1,2-diacyl-sn-glycero-3-phospho-(1D-myo-inositol-3,5-bisphosphate). Residues Asn250, Asn275, and Ile276 each coordinate a 1,2-diacyl-sn-glycero-3-phospho-(1D-myo-inositol-3-phosphate). The active-site Phosphocysteine intermediate is Cys338. A 1,2-diacyl-sn-glycero-3-phospho-(1D-myo-inositol-3,5-bisphosphate) is bound by residues Ser339, Asp340, Gly341, Trp342, Asp343, Arg344, Lys380, and Arg384. 6 residues coordinate a 1,2-diacyl-sn-glycero-3-phospho-(1D-myo-inositol-3-phosphate): Ser339, Asp340, Gly341, Trp342, Asp343, and Arg344. Residues Ser339 and Asp340 each contribute to the phosphate site. Phosphate is bound by residues Trp342, Asp343, and Arg344. Arg384 lines the a 1,2-diacyl-sn-glycero-3-phospho-(1D-myo-inositol-3-phosphate) pocket. A coiled-coil region spans residues 517–543; sequence LLSCMNQKIKLEDNASELENKLPFLDG.

Belongs to the protein-tyrosine phosphatase family. Non-receptor class myotubularin subfamily. Homodimer.

It is found in the nucleus envelope. It carries out the reaction a 1,2-diacyl-sn-glycero-3-phospho-(1D-myo-inositol-3,5-bisphosphate) + H2O = a 1,2-diacyl-sn-glycero-3-phospho-(1D-myo-inositol-5-phosphate) + phosphate. It catalyses the reaction a 1,2-diacyl-sn-glycero-3-phospho-(1D-myo-inositol-3-phosphate) + H2O = a 1,2-diacyl-sn-glycero-3-phospho-(1D-myo-inositol) + phosphate. The enzyme catalyses 1,2-dioctanoyl-sn-glycero-3-phospho-(1D-myo-inositol-3,5-bisphosphate) + H2O = 1,2-dioctanoyl-sn-glycero-3-phospho-(1D-myo-inositol-5-phosphate) + phosphate. In terms of biological role, lipid phosphatase that specifically dephosphorylates the D-3 position of phosphatidylinositol 3-phosphate and phosphatidylinositol 3,5-bisphosphate, generating phosphatidylinositol and phosphatidylinositol 5-phosphate. The polypeptide is Phosphatidylinositol-3,5-bisphosphate 3-phosphatase MTMR8 (Gallus gallus (Chicken)).